A 430-amino-acid chain; its full sequence is Maintenance of mitochondrial morphology protein 1 (430 aa).

Over 1–82 (MTEIDPNINE…ISNTWNFTQG (82 aa)) the chain is Lumenal. A helical transmembrane segment spans residues 83 to 103 (LVVGQLSVIFLIIIFVKFFVF). At 104 to 430 (ADSSSSIPSK…AKPKDSDDTL (327 aa)) the chain is on the cytoplasmic side. Basic and acidic residues-rich tracts occupy residues 126-138 (RDNKSTTSRDRHN) and 335-346 (ENGKGSSSEDKK). 2 disordered regions span residues 126–154 (RDNKSTTSRDRHNGIGGKDSNLEPSTDDE) and 315–346 (QADQVARPSNGHTSTDNGNDENGKGSSSEDKK). One can recognise an SMP-LTD domain in the interval 178 to 408 (ASESLDWFNV…EPRFQVVKLP (231 aa)).

The protein belongs to the MMM1 family. As to quaternary structure, homodimer. Component of the ER-mitochondria encounter structure (ERMES) or MDM complex, composed of MMM1, MDM10, MDM12 and MDM34. An MMM1 homodimer associates with one molecule of MDM12 on each side in a pairwise head-to-tail manner, and the SMP-LTD domains of MMM1 and MDM12 generate a continuous hydrophobic tunnel for phospholipid trafficking.

It is found in the endoplasmic reticulum membrane. Its function is as follows. Component of the ERMES/MDM complex, which serves as a molecular tether to connect the endoplasmic reticulum (ER) and mitochondria. Components of this complex are involved in the control of mitochondrial shape and protein biogenesis, and function in nonvesicular lipid trafficking between the ER and mitochondria. The MDM12-MMM1 subcomplex functions in the major beta-barrel assembly pathway that is responsible for biogenesis of all outer membrane beta-barrel proteins, and acts in a late step after the SAM complex. The MDM10-MDM12-MMM1 subcomplex further acts in the TOM40-specific pathway after the action of the MDM12-MMM1 complex. Essential for establishing and maintaining the structure of mitochondria and maintenance of mtDNA nucleoids. The chain is Maintenance of mitochondrial morphology protein 1 from Lodderomyces elongisporus (strain ATCC 11503 / CBS 2605 / JCM 1781 / NBRC 1676 / NRRL YB-4239) (Yeast).